Here is an 89-residue protein sequence, read N- to C-terminus: Small ribosomal subunit protein uS15 (89 aa).

The protein belongs to the universal ribosomal protein uS15 family. In terms of assembly, part of the 30S ribosomal subunit. Forms a bridge to the 50S subunit in the 70S ribosome, contacting the 23S rRNA.

In terms of biological role, one of the primary rRNA binding proteins, it binds directly to 16S rRNA where it helps nucleate assembly of the platform of the 30S subunit by binding and bridging several RNA helices of the 16S rRNA. Forms an intersubunit bridge (bridge B4) with the 23S rRNA of the 50S subunit in the ribosome. In Acidothermus cellulolyticus (strain ATCC 43068 / DSM 8971 / 11B), this protein is Small ribosomal subunit protein uS15.